The primary structure comprises 89 residues: Small ribosomal subunit protein uS15 (89 aa).

It belongs to the universal ribosomal protein uS15 family. In terms of assembly, part of the 30S ribosomal subunit. Forms a bridge to the 50S subunit in the 70S ribosome, contacting the 23S rRNA.

Its function is as follows. One of the primary rRNA binding proteins, it binds directly to 16S rRNA where it helps nucleate assembly of the platform of the 30S subunit by binding and bridging several RNA helices of the 16S rRNA. Forms an intersubunit bridge (bridge B4) with the 23S rRNA of the 50S subunit in the ribosome. This Listeria innocua serovar 6a (strain ATCC BAA-680 / CLIP 11262) protein is Small ribosomal subunit protein uS15.